The chain runs to 63 residues: Large ribosomal subunit protein eL37 (63 aa).

Zn(2+)-binding residues include C20, C23, C35, and C38. The C4-type zinc finger occupies 20–38 (CRRCGHHSFNVRKGYCAHC).

Belongs to the eukaryotic ribosomal protein eL37 family. Zn(2+) serves as cofactor.

Its function is as follows. Binds to the 23S rRNA. The sequence is that of Large ribosomal subunit protein eL37 from Thermofilum pendens (strain DSM 2475 / Hrk 5).